Here is a 285-residue protein sequence, read N- to C-terminus: MDKIKVGLQYWIPQHGLTRLVGKLASAKAGSLTTAIIRWFIKQYNVNMDEAKHADPKHYKTFNEFFVRELKEGARPIAEGDAIITHPADACVSQFGPITNGQLIQAKGHDFSAQELLGGDAALAEEFKDGSFATLYLSPRDYHRVHMPCDGTLRQMIYVPGDLFSVNPLTAENVPNLFARNERVVCIFDTEFGPMAQVLVGATIVGSIEQVWAGTITPPRGNTVYKWDYPASGNHAVILKKGEEMGRFKLGSTVINLFAKDAIRFDESMANGQPTVMGTPYAHQQ.

Active-site charge relay system; for autoendoproteolytic cleavage activity residues include Asp89, His146, and Ser252. Ser252 acts as the Schiff-base intermediate with substrate; via pyruvic acid; for decarboxylase activity in catalysis. Ser252 carries the pyruvic acid (Ser); by autocatalysis modification.

This sequence belongs to the phosphatidylserine decarboxylase family. PSD-B subfamily. Prokaryotic type I sub-subfamily. In terms of assembly, heterodimer of a large membrane-associated beta subunit and a small pyruvoyl-containing alpha subunit. Pyruvate is required as a cofactor. Post-translationally, is synthesized initially as an inactive proenzyme. Formation of the active enzyme involves a self-maturation process in which the active site pyruvoyl group is generated from an internal serine residue via an autocatalytic post-translational modification. Two non-identical subunits are generated from the proenzyme in this reaction, and the pyruvate is formed at the N-terminus of the alpha chain, which is derived from the carboxyl end of the proenzyme. The autoendoproteolytic cleavage occurs by a canonical serine protease mechanism, in which the side chain hydroxyl group of the serine supplies its oxygen atom to form the C-terminus of the beta chain, while the remainder of the serine residue undergoes an oxidative deamination to produce ammonia and the pyruvoyl prosthetic group on the alpha chain. During this reaction, the Ser that is part of the protease active site of the proenzyme becomes the pyruvoyl prosthetic group, which constitutes an essential element of the active site of the mature decarboxylase.

It is found in the cell membrane. The catalysed reaction is a 1,2-diacyl-sn-glycero-3-phospho-L-serine + H(+) = a 1,2-diacyl-sn-glycero-3-phosphoethanolamine + CO2. It functions in the pathway phospholipid metabolism; phosphatidylethanolamine biosynthesis; phosphatidylethanolamine from CDP-diacylglycerol: step 2/2. Catalyzes the formation of phosphatidylethanolamine (PtdEtn) from phosphatidylserine (PtdSer). This chain is Phosphatidylserine decarboxylase proenzyme, found in Vibrio vulnificus (strain CMCP6).